A 164-amino-acid polypeptide reads, in one-letter code: Phosphopantetheine adenylyltransferase (164 aa).

Substrate is bound at residue Ser9. Residues 9–10 (SF) and His17 contribute to the ATP site. Positions 41, 73, and 87 each coordinate substrate. ATP-binding positions include 88–90 (GLR), Glu98, and 123–129 (YSYISSS).

This sequence belongs to the bacterial CoaD family. Homohexamer. The cofactor is Mg(2+).

The protein localises to the cytoplasm. The enzyme catalyses (R)-4'-phosphopantetheine + ATP + H(+) = 3'-dephospho-CoA + diphosphate. Its pathway is cofactor biosynthesis; coenzyme A biosynthesis; CoA from (R)-pantothenate: step 4/5. Functionally, reversibly transfers an adenylyl group from ATP to 4'-phosphopantetheine, yielding dephospho-CoA (dPCoA) and pyrophosphate. The polypeptide is Phosphopantetheine adenylyltransferase (Clostridium perfringens (strain ATCC 13124 / DSM 756 / JCM 1290 / NCIMB 6125 / NCTC 8237 / Type A)).